Reading from the N-terminus, the 90-residue chain is DNA/RNA-binding protein Alba (90 aa).

Lys-11 carries the post-translational modification N6-acetyllysine.

Belongs to the histone-like Alba family. Acetylated. Acetylation at Lys-11 decreases DNA-binding affinity.

Its subcellular location is the cytoplasm. It is found in the chromosome. Its function is as follows. Binds double-stranded DNA tightly but without sequence specificity. Involved in DNA compaction. The polypeptide is DNA/RNA-binding protein Alba (Picrophilus torridus (strain ATCC 700027 / DSM 9790 / JCM 10055 / NBRC 100828 / KAW 2/3)).